We begin with the raw amino-acid sequence, 705 residues long: Polyribonucleotide nucleotidyltransferase (705 aa).

Asp-486 and Asp-492 together coordinate Mg(2+). The region spanning 553–612 (PRIHTMKVSQDKIRDIIGKGGATIRQLTEETGTTIEIEDDGTVKIAATSGEQAEDAINRI) is the KH domain. The S1 motif domain occupies 622-690 (GTLYTGKVVR…RQGRVRLSIK (69 aa)).

This sequence belongs to the polyribonucleotide nucleotidyltransferase family. In terms of assembly, component of the RNA degradosome, which is a multiprotein complex involved in RNA processing and mRNA degradation. Requires Mg(2+) as cofactor.

The protein localises to the cytoplasm. The catalysed reaction is RNA(n+1) + phosphate = RNA(n) + a ribonucleoside 5'-diphosphate. Involved in mRNA degradation. Catalyzes the phosphorolysis of single-stranded polyribonucleotides processively in the 3'- to 5'-direction. This Colwellia psychrerythraea (strain 34H / ATCC BAA-681) (Vibrio psychroerythus) protein is Polyribonucleotide nucleotidyltransferase.